We begin with the raw amino-acid sequence, 432 residues long: Guanine/hypoxanthine permease PbuO (432 aa).

10 consecutive transmembrane segments (helical) span residues 15-35 (IIAG…NPVI), 51-71 (IIAS…PIAI), 92-112 (GITY…FIIL), 133-153 (ITTG…GIVA), 174-194 (LVGL…ALFI), 196-216 (MAAT…KGFM), 234-254 (FGDV…LVTI), 340-360 (ALSG…SLMM), 379-399 (LVIL…LGFI), and 412-432 (REIH…LFIL).

Belongs to the nucleobase:cation symporter-2 (NCS2) (TC 2.A.40) family. Azg-like subfamily.

It is found in the cell membrane. Its function is as follows. Involved in the uptake of the purine bases hypoxanthine and guanine. May work at purine concentrations higher than 100 uM. The sequence is that of Guanine/hypoxanthine permease PbuO (pbuO) from Bacillus subtilis (strain 168).